A 356-amino-acid polypeptide reads, in one-letter code: Protein pelota homolog (356 aa).

This sequence belongs to the eukaryotic release factor 1 family. Pelota subfamily. In terms of assembly, monomer. The cofactor is a divalent metal cation.

The protein localises to the cytoplasm. Its function is as follows. May function in recognizing stalled ribosomes, interact with stem-loop structures in stalled mRNA molecules, and effect endonucleolytic cleavage of the mRNA. May play a role in the release non-functional ribosomes and degradation of damaged mRNAs. Has endoribonuclease activity. In Pyrococcus abyssi (strain GE5 / Orsay), this protein is Protein pelota homolog.